The following is a 118-amino-acid chain: Ribosome-binding factor A (118 aa).

This sequence belongs to the RbfA family. Monomer. Binds 30S ribosomal subunits, but not 50S ribosomal subunits or 70S ribosomes.

Its subcellular location is the cytoplasm. One of several proteins that assist in the late maturation steps of the functional core of the 30S ribosomal subunit. Associates with free 30S ribosomal subunits (but not with 30S subunits that are part of 70S ribosomes or polysomes). Required for efficient processing of 16S rRNA. May interact with the 5'-terminal helix region of 16S rRNA. This is Ribosome-binding factor A from Bacillus anthracis (strain A0248).